The sequence spans 354 residues: Guanine nucleotide-binding protein alpha-12 subunit (354 aa).

Residues 31–354 (QPLKLLLLGS…SLLMNVAEIL (324 aa)) form the G-alpha domain. A G1 motif region spans residues 34-47 (KLLLLGSGECGKST). GTP-binding positions include 39-46 (GSGECGKS), 178-184 (LRVRVKT), 203-207 (DVGGQ), 272-275 (NKID), and Ala329. Residues Ser46 and Thr184 each contribute to the Mg(2+) site. Residues 176–184 (DFLRVRVKT) form a G2 motif region. The interval 199–208 (FKLVDVGGQK) is G3 motif. The interval 268–275 (VLFFNKID) is G4 motif. The G5 motif stretch occupies residues 327 to 332 (TCALDS).

It belongs to the G-alpha family. In terms of assembly, g proteins are composed of 3 units; alpha, beta and gamma. The alpha chain contains the guanine nucleotide binding site.

Functionally, guanine nucleotide-binding proteins (G proteins) are involved as modulators or transducers in various transmembrane signaling systems. The sequence is that of Guanine nucleotide-binding protein alpha-12 subunit (gpaL) from Dictyostelium discoideum (Social amoeba).